Reading from the N-terminus, the 92-residue chain is MSRSTKKAPFVHEGLLKKIEEMNASGDKKVVKTWSRSSTIYPQMIGHTIAVHDGRKHVPVYLSEDMVGHKLGEFVLTRTYRGHVADKTSKRK.

Belongs to the universal ribosomal protein uS19 family.

Its function is as follows. Protein S19 forms a complex with S13 that binds strongly to the 16S ribosomal RNA. In Clostridium botulinum (strain Eklund 17B / Type B), this protein is Small ribosomal subunit protein uS19.